The following is a 238-amino-acid chain: UDP-2,3-diacylglucosamine hydrolase (238 aa).

Residues Asp8, His10, Asp41, Asn78, and His113 each coordinate Mn(2+). Residue 78 to 79 participates in substrate binding; that stretch reads NR. 5 residues coordinate substrate: Asp121, Ser159, Asn163, Lys166, and His194. 2 residues coordinate Mn(2+): His194 and His196.

It belongs to the LpxH family. Mn(2+) is required as a cofactor.

The protein resides in the cell inner membrane. It carries out the reaction UDP-2-N,3-O-bis[(3R)-3-hydroxytetradecanoyl]-alpha-D-glucosamine + H2O = 2-N,3-O-bis[(3R)-3-hydroxytetradecanoyl]-alpha-D-glucosaminyl 1-phosphate + UMP + 2 H(+). It participates in glycolipid biosynthesis; lipid IV(A) biosynthesis; lipid IV(A) from (3R)-3-hydroxytetradecanoyl-[acyl-carrier-protein] and UDP-N-acetyl-alpha-D-glucosamine: step 4/6. Functionally, hydrolyzes the pyrophosphate bond of UDP-2,3-diacylglucosamine to yield 2,3-diacylglucosamine 1-phosphate (lipid X) and UMP by catalyzing the attack of water at the alpha-P atom. Involved in the biosynthesis of lipid A, a phosphorylated glycolipid that anchors the lipopolysaccharide to the outer membrane of the cell. The chain is UDP-2,3-diacylglucosamine hydrolase from Shewanella piezotolerans (strain WP3 / JCM 13877).